We begin with the raw amino-acid sequence, 750 residues long: Photosystem I P700 chlorophyll a apoprotein A1 (750 aa).

A run of 8 helical transmembrane segments spans residues valine 70 to alanine 93, leucine 156 to histidine 179, leucine 195 to leucine 219, isoleucine 291 to tyrosine 309, tryptophan 346 to tyrosine 369, leucine 385 to valine 411, alanine 433 to histidine 455, and phenylalanine 531 to leucine 549. The [4Fe-4S] cluster site is built by cysteine 573 and cysteine 582. Helical transmembrane passes span histidine 589–tryptophan 610 and leucine 664–phenylalanine 686. Histidine 675 provides a ligand contact to chlorophyll a'. The chlorophyll a site is built by methionine 683 and tyrosine 691. Tryptophan 692 is a binding site for phylloquinone. A helical membrane pass occupies residues alanine 724–alanine 744.

It belongs to the PsaA/PsaB family. As to quaternary structure, the PsaA/B heterodimer binds the P700 chlorophyll special pair and subsequent electron acceptors. PSI consists of a core antenna complex that captures photons, and an electron transfer chain that converts photonic excitation into a charge separation. The eukaryotic PSI reaction center is composed of at least 11 subunits. P700 is a chlorophyll a/chlorophyll a' dimer, A0 is one or more chlorophyll a, A1 is one or both phylloquinones and FX is a shared 4Fe-4S iron-sulfur center. serves as cofactor.

Its subcellular location is the plastid. It is found in the chloroplast thylakoid membrane. The enzyme catalyses reduced [plastocyanin] + hnu + oxidized [2Fe-2S]-[ferredoxin] = oxidized [plastocyanin] + reduced [2Fe-2S]-[ferredoxin]. In terms of biological role, psaA and PsaB bind P700, the primary electron donor of photosystem I (PSI), as well as the electron acceptors A0, A1 and FX. PSI is a plastocyanin-ferredoxin oxidoreductase, converting photonic excitation into a charge separation, which transfers an electron from the donor P700 chlorophyll pair to the spectroscopically characterized acceptors A0, A1, FX, FA and FB in turn. Oxidized P700 is reduced on the lumenal side of the thylakoid membrane by plastocyanin. In Panax ginseng (Korean ginseng), this protein is Photosystem I P700 chlorophyll a apoprotein A1.